Here is a 286-residue protein sequence, read N- to C-terminus: 4-diphosphocytidyl-2-C-methyl-D-erythritol kinase (286 aa).

Residue K11 is part of the active site. Position 94-104 (94-104 (PMGGGIGGGSS)) interacts with ATP. D136 is an active-site residue.

The protein belongs to the GHMP kinase family. IspE subfamily.

The catalysed reaction is 4-CDP-2-C-methyl-D-erythritol + ATP = 4-CDP-2-C-methyl-D-erythritol 2-phosphate + ADP + H(+). The protein operates within isoprenoid biosynthesis; isopentenyl diphosphate biosynthesis via DXP pathway; isopentenyl diphosphate from 1-deoxy-D-xylulose 5-phosphate: step 3/6. In terms of biological role, catalyzes the phosphorylation of the position 2 hydroxy group of 4-diphosphocytidyl-2C-methyl-D-erythritol. This chain is 4-diphosphocytidyl-2-C-methyl-D-erythritol kinase, found in Pseudomonas entomophila (strain L48).